Reading from the N-terminus, the 92-residue chain is Envelope glycoprotein J (92 aa).

The first 22 residues, 1–22 (MDRYAVRTWGIVGILGCAAVGA), serve as a signal peptide directing secretion. Residues 23-49 (APTGPASDTTNATARLPTHPPLIRSGG) lie on the Extracellular side of the membrane. Asn33 is a glycosylation site (N-linked (GlcNAc...) asparagine; by host). Residues 50–70 (FAVPLIVGGLCLMILGMACLL) traverse the membrane as a helical segment. Over 71–92 (EVLRRLGRELARCCPHAGQFAP) the chain is Cytoplasmic.

It belongs to the alphaherpesvirinae glycoprotein J family.

It localises to the host Golgi apparatus membrane. It is found in the host endoplasmic reticulum membrane. The protein localises to the host endosome membrane. In terms of biological role, functions as an activator of viral protein expression and virus production. In turn, promotes cell-to-cell spread as well as syncytia formation. This chain is Envelope glycoprotein J (gJ), found in Homo sapiens (Human).